The sequence spans 358 residues: MSALTIPAARRTLNNAPIIDAANGKTPTRTPVWFMRQAGRSLPEYKKVREGISMLDSCFMPELLAEITLQPVRRHDVDAAILFSDIVVPLRAAGVGVEIVAGRGPVLDAPVRSREDVLNLPILEGNVPEVEQGIGIILDELSDSQALIGFAGAPFTLASYLVEGGPSKNHEKTKAMMHGDPETWHALMARLVPTIVNSLKSQIDAGIDAMQLFDSWAGFLTERDYTEFVLPYSTEILEEVGKYQLPRIHFGVGTGELLGAMSKAGSEVMGVDWRVPLDKAAERIAAVSGPKVLQGNLDPALLFAGRAPLTKEIERIKAEAQTAIDAGHATGHIFNLGHGVLPNTVAEDITEAVSIIHS.

Substrate is bound by residues 36-40, aspartate 85, tyrosine 160, serine 215, and histidine 338; that span reads RQAGR.

This sequence belongs to the uroporphyrinogen decarboxylase family. As to quaternary structure, homodimer.

It localises to the cytoplasm. It catalyses the reaction uroporphyrinogen III + 4 H(+) = coproporphyrinogen III + 4 CO2. Its pathway is porphyrin-containing compound metabolism; protoporphyrin-IX biosynthesis; coproporphyrinogen-III from 5-aminolevulinate: step 4/4. Its function is as follows. Catalyzes the decarboxylation of four acetate groups of uroporphyrinogen-III to yield coproporphyrinogen-III. This is Uroporphyrinogen decarboxylase from Corynebacterium glutamicum (strain R).